The primary structure comprises 452 residues: Phosphoglucosamine mutase (452 aa).

S109 serves as the catalytic Phosphoserine intermediate. Residues S109, D248, D250, and D252 each coordinate Mg(2+). S109 carries the phosphoserine modification.

Belongs to the phosphohexose mutase family. Mg(2+) is required as a cofactor. Activated by phosphorylation.

The catalysed reaction is alpha-D-glucosamine 1-phosphate = D-glucosamine 6-phosphate. Functionally, catalyzes the conversion of glucosamine-6-phosphate to glucosamine-1-phosphate. The polypeptide is Phosphoglucosamine mutase (Erythrobacter litoralis (strain HTCC2594)).